The following is a 197-amino-acid chain: Imidazoleglycerol-phosphate dehydratase (197 aa).

Belongs to the imidazoleglycerol-phosphate dehydratase family.

It localises to the cytoplasm. The enzyme catalyses D-erythro-1-(imidazol-4-yl)glycerol 3-phosphate = 3-(imidazol-4-yl)-2-oxopropyl phosphate + H2O. It functions in the pathway amino-acid biosynthesis; L-histidine biosynthesis; L-histidine from 5-phospho-alpha-D-ribose 1-diphosphate: step 6/9. This Halorhodospira halophila (strain DSM 244 / SL1) (Ectothiorhodospira halophila (strain DSM 244 / SL1)) protein is Imidazoleglycerol-phosphate dehydratase.